We begin with the raw amino-acid sequence, 48 residues long: Cytochrome b559 subunit beta (48 aa).

A helical membrane pass occupies residues 23–39; sequence WLAVHALAIPTVFFLGA. Heme is bound at residue His27.

This sequence belongs to the PsbE/PsbF family. In terms of assembly, heterodimer of an alpha subunit and a beta subunit. PSII is composed of 1 copy each of membrane proteins PsbA, PsbB, PsbC, PsbD, PsbE, PsbF, PsbH, PsbI, PsbJ, PsbK, PsbL, PsbM, PsbT, PsbX, PsbY, Psb30/Ycf12, peripheral proteins PsbO, CyanoQ (PsbQ), PsbU, PsbV and a large number of cofactors. It forms dimeric complexes. Requires heme b as cofactor.

The protein localises to the cellular thylakoid membrane. This b-type cytochrome is tightly associated with the reaction center of photosystem II (PSII). PSII is a light-driven water:plastoquinone oxidoreductase that uses light energy to abstract electrons from H(2)O, generating O(2) and a proton gradient subsequently used for ATP formation. It consists of a core antenna complex that captures photons, and an electron transfer chain that converts photonic excitation into a charge separation. The protein is Cytochrome b559 subunit beta of Prochlorococcus marinus (strain SARG / CCMP1375 / SS120).